The primary structure comprises 56 residues: Large ribosomal subunit protein bL32 (56 aa).

Residues 1–23 (MAVQQNKSTRSKRGMRRSHNALP) are disordered. Residues 9 to 19 (TRSKRGMRRSH) show a composition bias toward basic residues.

This sequence belongs to the bacterial ribosomal protein bL32 family.

The chain is Large ribosomal subunit protein bL32 from Blochmanniella floridana.